Here is a 261-residue protein sequence, read N- to C-terminus: 5'-nucleotidase SurE (261 aa).

Positions 8, 9, 39, and 94 each coordinate a divalent metal cation.

The protein belongs to the SurE nucleotidase family. The cofactor is a divalent metal cation.

Its subcellular location is the cytoplasm. The enzyme catalyses a ribonucleoside 5'-phosphate + H2O = a ribonucleoside + phosphate. Nucleotidase that shows phosphatase activity on nucleoside 5'-monophosphates. In Methanopyrus kandleri (strain AV19 / DSM 6324 / JCM 9639 / NBRC 100938), this protein is 5'-nucleotidase SurE.